The chain runs to 124 residues: Small ribosomal subunit protein uS12 (124 aa).

3-methylthioaspartic acid is present on Asp-89.

Belongs to the universal ribosomal protein uS12 family. As to quaternary structure, part of the 30S ribosomal subunit. Contacts proteins S8 and S17. May interact with IF1 in the 30S initiation complex.

Functionally, with S4 and S5 plays an important role in translational accuracy. Its function is as follows. Interacts with and stabilizes bases of the 16S rRNA that are involved in tRNA selection in the A site and with the mRNA backbone. Located at the interface of the 30S and 50S subunits, it traverses the body of the 30S subunit contacting proteins on the other side and probably holding the rRNA structure together. The combined cluster of proteins S8, S12 and S17 appears to hold together the shoulder and platform of the 30S subunit. The polypeptide is Small ribosomal subunit protein uS12 (Hydrogenovibrio crunogenus (strain DSM 25203 / XCL-2) (Thiomicrospira crunogena)).